Consider the following 114-residue polypeptide: Immunomodulatory protein FIP-Fve (114 aa).

Serine 1 bears the N-acetylserine mark.

It belongs to the fungal immunomodulatory protein (FIP) family. In terms of assembly, homodimer.

Its function is as follows. Lectin with specificity for complex cell-surface carbohydrates. Possesses immunomodulatory activity, stimulates lymphocyte mitogenesis, suppresses systemic anaphylaxis reactions and edema, enhances transcription of IL-2, IFN-gamma and TNF-alpha and hemagglutinates red blood cells. This chain is Immunomodulatory protein FIP-Fve, found in Flammulina velutipes (Agaricus velutipes).